Here is a 65-residue protein sequence, read N- to C-terminus: Sec-independent protein translocase protein TatA (65 aa).

The chain crosses the membrane as a helical span at residues 9–29 (ILIIVLLVVVVFGIGKLPQVG). Residues 43–65 (SSGEEEKEEVETKEETKTIEKSE) are disordered. A compositionally biased stretch (acidic residues) spans 45–54 (GEEEKEEVET). Over residues 55 to 65 (KEETKTIEKSE) the composition is skewed to basic and acidic residues.

It belongs to the TatA/E family. Forms a complex with TatC.

It localises to the cell membrane. Its function is as follows. Part of the twin-arginine translocation (Tat) system that transports large folded proteins containing a characteristic twin-arginine motif in their signal peptide across membranes. TatA could form the protein-conducting channel of the Tat system. The chain is Sec-independent protein translocase protein TatA from Dehalococcoides mccartyi (strain ATCC BAA-2266 / KCTC 15142 / 195) (Dehalococcoides ethenogenes (strain 195)).